Reading from the N-terminus, the 411-residue chain is GTPase Obg (411 aa).

An Obg domain is found at 1-157; that stretch reads MQFIDEARFV…REIRLELRVL (157 aa). The disordered stretch occupies residues 20–45; that stretch reads AVSFHREKYRPRGGPDGGRGGDGGSV. Residues 33-43 are compositionally biased toward gly residues; it reads GPDGGRGGDGG. The region spanning 158–330 is the OBG-type G domain; the sequence is SDVGLVGLPN…LERSAEAAPR (173 aa). GTP contacts are provided by residues 164-171, 189-193, 212-215, 276-279, and 311-313; these read GLPNAGKS, FTTLT, DIPG, NKVD, and ARL. The Mg(2+) site is built by S171 and T191. An OCT domain is found at 335–411; sequence VFRPSWRGLR…RIGDVSFEFR (77 aa).

This sequence belongs to the TRAFAC class OBG-HflX-like GTPase superfamily. OBG GTPase family. In terms of assembly, monomer. Requires Mg(2+) as cofactor.

It is found in the cytoplasm. An essential GTPase which binds GTP, GDP and possibly (p)ppGpp with moderate affinity, with high nucleotide exchange rates and a fairly low GTP hydrolysis rate. Plays a role in control of the cell cycle, stress response, ribosome biogenesis and in those bacteria that undergo differentiation, in morphogenesis control. The sequence is that of GTPase Obg from Rubrobacter xylanophilus (strain DSM 9941 / JCM 11954 / NBRC 16129 / PRD-1).